The following is a 629-amino-acid chain: tRNA uridine 5-carboxymethylaminomethyl modification enzyme MnmG (629 aa).

FAD is bound by residues 13–18 (GGGHAG), V125, and S180. 273–287 (GPRYCPSIEDKVMRF) is a binding site for NAD(+). Position 370 (Q370) interacts with FAD.

It belongs to the MnmG family. In terms of assembly, homodimer. Heterotetramer of two MnmE and two MnmG subunits. It depends on FAD as a cofactor.

The protein resides in the cytoplasm. Functionally, NAD-binding protein involved in the addition of a carboxymethylaminomethyl (cmnm) group at the wobble position (U34) of certain tRNAs, forming tRNA-cmnm(5)s(2)U34. This Enterobacter sp. (strain 638) protein is tRNA uridine 5-carboxymethylaminomethyl modification enzyme MnmG.